Consider the following 81-residue polypeptide: Conotoxin ArMKLT2-01 (81 aa).

The signal sequence occupies residues 1–19 (MKLTCVIIVVALFLTACHA). Residues 20–43 (KDKQEHPAVRGSDDMQDSEDLKLA) constitute a propeptide that is removed on maturation. 3 cysteine pairs are disulfide-bonded: cysteine 46–cysteine 61, cysteine 53–cysteine 65, and cysteine 60–cysteine 74.

The protein belongs to the conotoxin O1 superfamily. Expressed by the venom duct.

It localises to the secreted. This is Conotoxin ArMKLT2-01 from Conus arenatus (Sand-dusted cone).